The sequence spans 359 residues: F-box protein At1g10895 (359 aa).

In terms of domain architecture, F-box spans 2-48 (TTMSDLDEIMVAEILCRTPMTCLKTVRSVCKKWNALSKKWFFFGKAK).

This chain is F-box protein At1g10895, found in Arabidopsis thaliana (Mouse-ear cress).